Consider the following 620-residue polypeptide: Synchronized import protein 1 (620 aa).

The interval 1-32 (MGRSKKRSRASSSRLNPLRKAGSNDNNKDTNV) is disordered. 8 ARM repeats span residues 25–64 (DNNK…VLCE), 66–106 (AHMR…NLSL), 181–221 (DDIL…TTLD), 258–299 (ANEL…NIDP), 340–386 (IKLQ…NFLP), 435–470 (DSQD…NRAL), 471–510 (INVQ…TYAM), and 564–607 (RGGF…TLDS).

The protein belongs to the nuclear import and ribosome assembly adapter family. Forms a heterotrimeric complex with RPL5 and RPL11A or RPL11B; interaction of this complex with KAP104 allows the nuclear import of the heterotrimer. Component of a hexameric 5S RNP precursor complex, composed of 5S RNA, RRS1, RPF2, RPL5, RPL11A/RPL11B and SYO1; this complex acts as a precursor for ribosome assembly.

It localises to the cytoplasm. The protein localises to the nucleus. Functionally, nuclear import adapter that specifically recruits the two functionally and topologically linked ribosomal proteins RPL5 and RPL11 (encoded by RPL11A and RPL11B). Guarantees that this cargo pair remains bound together from the time of synthesis in the cytoplasm until delivery to the nascent 5S rRNA in the nucleus. The sequence is that of Synchronized import protein 1 (SYO1) from Saccharomyces cerevisiae (strain ATCC 204508 / S288c) (Baker's yeast).